We begin with the raw amino-acid sequence, 473 residues long: ATP synthase subunit beta (473 aa).

Residue 153–160 (GGAGVGKT) participates in ATP binding.

Belongs to the ATPase alpha/beta chains family. As to quaternary structure, F-type ATPases have 2 components, CF(1) - the catalytic core - and CF(0) - the membrane proton channel. CF(1) has five subunits: alpha(3), beta(3), gamma(1), delta(1), epsilon(1). CF(0) has three main subunits: a(1), b(2) and c(9-12). The alpha and beta chains form an alternating ring which encloses part of the gamma chain. CF(1) is attached to CF(0) by a central stalk formed by the gamma and epsilon chains, while a peripheral stalk is formed by the delta and b chains.

Its subcellular location is the cell inner membrane. The enzyme catalyses ATP + H2O + 4 H(+)(in) = ADP + phosphate + 5 H(+)(out). Produces ATP from ADP in the presence of a proton gradient across the membrane. The catalytic sites are hosted primarily by the beta subunits. The protein is ATP synthase subunit beta of Rickettsia canadensis (strain McKiel).